The primary structure comprises 283 residues: Pantothenate synthetase (283 aa).

26–33 is an ATP binding site; that stretch reads MGNLHEGH. Catalysis depends on histidine 33, which acts as the Proton donor. Residue glutamine 57 participates in (R)-pantoate binding. Glutamine 57 is a binding site for beta-alanine. Residue 148 to 151 coordinates ATP; that stretch reads GKKD. Residue glutamine 154 coordinates (R)-pantoate. 185–188 lines the ATP pocket; the sequence is LSSR.

It belongs to the pantothenate synthetase family. As to quaternary structure, homodimer.

It localises to the cytoplasm. It catalyses the reaction (R)-pantoate + beta-alanine + ATP = (R)-pantothenate + AMP + diphosphate + H(+). Its pathway is cofactor biosynthesis; (R)-pantothenate biosynthesis; (R)-pantothenate from (R)-pantoate and beta-alanine: step 1/1. Catalyzes the condensation of pantoate with beta-alanine in an ATP-dependent reaction via a pantoyl-adenylate intermediate. This Polaromonas naphthalenivorans (strain CJ2) protein is Pantothenate synthetase.